Consider the following 411-residue polypeptide: Putative ion-transport protein YfeO (411 aa).

Transmembrane regions (helical) follow at residues 9-29, 54-74, 99-119, 149-169, 186-206, 223-243, 258-278, 296-316, 322-342, 343-363, and 386-406; these read MLLL…VLIA, DSPF…GLII, ALPG…SLGP, ILAS…AALI, LFAP…FFHP, IASG…AVWC, VLIL…GGPL, LGAG…VIAA, GGRI…LHAH, VEAV…VLVV, and LLCI…LLAA.

The protein belongs to the chloride channel (TC 2.A.49) family.

It is found in the cell membrane. The polypeptide is Putative ion-transport protein YfeO (Salmonella agona (strain SL483)).